Here is a 136-residue protein sequence, read N- to C-terminus: Transcription antitermination protein NusB (136 aa).

The protein belongs to the NusB family.

In terms of biological role, involved in transcription antitermination. Required for transcription of ribosomal RNA (rRNA) genes. Binds specifically to the boxA antiterminator sequence of the ribosomal RNA (rrn) operons. This chain is Transcription antitermination protein NusB, found in Paenarthrobacter aurescens (strain TC1).